The following is a 529-amino-acid chain: Type I restriction enzyme StySPI methylase subunit (529 aa).

Residues 148 to 153, 178 to 180, and glutamate 216 contribute to the S-adenosyl-L-methionine site; these read QYFTPR and TAG. Residues 424–443 form a disordered region; sequence AEESEVADSEENKNADQHQA.

It belongs to the N(4)/N(6)-methyltransferase family. The type I restriction/modification system is composed of three polypeptides R, M and S; the restriction enzyme has stoichiometry R(2)M(2)S(1) while the methyltransferase is M(2)S(1).

The catalysed reaction is a 2'-deoxyadenosine in DNA + S-adenosyl-L-methionine = an N(6)-methyl-2'-deoxyadenosine in DNA + S-adenosyl-L-homocysteine + H(+). The subtype gamma methyltransferase (M) subunit of a type I restriction enzyme. The M and S subunits together form a methyltransferase (MTase) that methylates A-2 on the top strand and A-3 on the bottom strand of the sequence 5'-AACN(6)GTRC-3'. In the presence of the R subunit the complex can also act as an endonuclease, binding to the same target sequence but cutting the DNA some distance from this site. Whether the DNA is cut or modified depends on the methylation state of the target sequence. When the target site is unmodified, the DNA is cut. When the target site is hemimethylated, the complex acts as a maintenance MTase modifying the DNA so that both strands become methylated. After locating a non-methylated recognition site, the enzyme complex serves as a molecular motor that translocates DNA in an ATP-dependent manner until a collision occurs that triggers cleavage. The protein is Type I restriction enzyme StySPI methylase subunit of Salmonella potsdam.